Reading from the N-terminus, the 599-residue chain is rRNA (cytosine-C(5))-methyltransferase NOP2C (599 aa).

The 108-residue stretch at 158–265 (PKEVLVSRKC…IAVDLNHRVF (108 aa)) folds into the PUA domain. S-adenosyl-L-methionine is bound by residues 304–310 (CAAPGGK), D328, and D355. A disordered region spans residues 372–454 (LINGDNSSSM…GGRAGKSQGF (83 aa)). A compositionally biased stretch (low complexity) spans 378–388 (SSSMTSHSELS). Residues 399–412 (RRSEADKSCEKNDS) show a composition bias toward basic and acidic residues. The span at 413 to 424 (TEQPNGGDNVSQ) shows a compositional bias: polar residues. Residues 428 to 438 (RKNKGRLKNGR) are compositionally biased toward basic residues. Residue D465 coordinates S-adenosyl-L-methionine. Catalysis depends on C516, which acts as the Nucleophile.

It belongs to the class I-like SAM-binding methyltransferase superfamily. RsmB/NOP family.

Its subcellular location is the nucleus. The protein resides in the nucleolus. It carries out the reaction a cytidine in rRNA + S-adenosyl-L-methionine = a 5-methylcytidine in rRNA + S-adenosyl-L-homocysteine + H(+). Involved in ribosomal large subunit assembly. S-adenosyl-L-methionine-dependent methyltransferase that may methylates the C(5) position of cytosine in rRNA. May play a role in the regulation of the cell cycle and the increased nucleolar activity that is associated with the cell proliferation. Seems involved in the regulation of cell proliferation. The polypeptide is rRNA (cytosine-C(5))-methyltransferase NOP2C (Arabidopsis thaliana (Mouse-ear cress)).